Here is a 316-residue protein sequence, read N- to C-terminus: Apolipoprotein E (316 aa).

The signal sequence occupies residues 1–18 (MKVLWVALVITLLAGCQA). 8 consecutive repeat copies span residues 79–100 (VLMD…GQLA), 101–122 (PIAQ…ARLA), 123–144 (SDME…AMMG), 145–166 (QTTD…KRLL), 167–188 (RDAE…EGSE), 189–210 (RSVS…ARAA), 211–232 (TVGT…QKLR), and 233–254 (GRVE…EQLE). Residues 79–254 (VLMDETMKEV…HLEEMREQLE (176 aa)) are 8 X 22 AA approximate tandem repeats. Met142 bears the Methionine sulfoxide mark. The LDL and other lipoprotein receptors binding stretch occupies residues 157-167 (HLRKLRKRLLR). Position 161 to 164 (161 to 164 (LRKR)) interacts with heparin. The interval 209–289 (AATVGTLASQ…SWFEPLVEDM (81 aa)) is lipid-binding and lipoprotein association. 228-235 (HQKLRGRV) contributes to the heparin binding site. The interval 265–316 (SQMRLQAEAFQARLKSWFEPLVEDMQRQWAGLVEKVQLAMATSSTSAPSENH) is homooligomerization. A specificity for association with VLDL region spans residues 277–289 (RLKSWFEPLVEDM).

The protein belongs to the apolipoprotein A1/A4/E family. Homotetramer. May interact with ABCA1; functionally associated with ABCA1 in the biogenesis of HDLs. May interact with APP/A4 amyloid-beta peptide; the interaction is extremely stable in vitro but its physiological significance is unclear. May interact with MAPT. May interact with MAP2. In the cerebrospinal fluid, interacts with secreted SORL1. Interacts with PMEL; this allows the loading of PMEL luminal fragment on ILVs to induce fibril nucleation. Post-translationally, APOE exists as multiple glycosylated and sialylated glycoforms within cells and in plasma. The extent of glycosylation and sialylation are tissue and context specific. Glycated in plasma VLDL. In terms of processing, phosphorylated by FAM20C in the extracellular medium.

It is found in the secreted. It localises to the extracellular space. The protein resides in the extracellular matrix. The protein localises to the extracellular vesicle. Its subcellular location is the endosome. It is found in the multivesicular body. Its function is as follows. APOE is an apolipoprotein, a protein associating with lipid particles, that mainly functions in lipoprotein-mediated lipid transport between organs via the plasma and interstitial fluids. APOE is a core component of plasma lipoproteins and is involved in their production, conversion and clearance. Apolipoproteins are amphipathic molecules that interact both with lipids of the lipoprotein particle core and the aqueous environment of the plasma. As such, APOE associates with chylomicrons, chylomicron remnants, very low density lipoproteins (VLDL) and intermediate density lipoproteins (IDL) but shows a preferential binding to high-density lipoproteins (HDL). It also binds a wide range of cellular receptors including the LDL receptor/LDLR and the very low-density lipoprotein receptor/VLDLR that mediate the cellular uptake of the APOE-containing lipoprotein particles. Finally, APOE also has a heparin-binding activity and binds heparan-sulfate proteoglycans on the surface of cells, a property that supports the capture and the receptor-mediated uptake of APOE-containing lipoproteins by cells. This chain is Apolipoprotein E (APOE), found in Lipotes vexillifer (Yangtze river dolphin).